The chain runs to 101 residues: UPF0213 protein VC0395_0675/VC395_A0575 (101 aa).

One can recognise a GIY-YIG domain in the interval 9 to 85; the sequence is SPWFVYLVRC…KALSKSQKEA (77 aa).

This sequence belongs to the UPF0213 family.

The sequence is that of UPF0213 protein VC0395_0675/VC395_A0575 from Vibrio cholerae serotype O1 (strain ATCC 39541 / Classical Ogawa 395 / O395).